Here is a 202-residue protein sequence, read N- to C-terminus: 3-isopropylmalate dehydratase small subunit (202 aa).

It belongs to the LeuD family. LeuD type 1 subfamily. In terms of assembly, heterodimer of LeuC and LeuD.

The enzyme catalyses (2R,3S)-3-isopropylmalate = (2S)-2-isopropylmalate. Its pathway is amino-acid biosynthesis; L-leucine biosynthesis; L-leucine from 3-methyl-2-oxobutanoate: step 2/4. In terms of biological role, catalyzes the isomerization between 2-isopropylmalate and 3-isopropylmalate, via the formation of 2-isopropylmaleate. This is 3-isopropylmalate dehydratase small subunit from Caulobacter vibrioides (strain ATCC 19089 / CIP 103742 / CB 15) (Caulobacter crescentus).